The primary structure comprises 440 residues: Eukaryotic translation initiation factor 3 subunit E (440 aa).

Positions V219 to T392 constitute a PCI domain.

This sequence belongs to the eIF-3 subunit E family. As to quaternary structure, component of the eukaryotic translation initiation factor 3 (eIF-3) complex.

The protein resides in the cytoplasm. Its function is as follows. Component of the eukaryotic translation initiation factor 3 (eIF-3) complex, which is involved in protein synthesis of a specialized repertoire of mRNAs and, together with other initiation factors, stimulates binding of mRNA and methionyl-tRNAi to the 40S ribosome. The eIF-3 complex specifically targets and initiates translation of a subset of mRNAs involved in cell proliferation. This chain is Eukaryotic translation initiation factor 3 subunit E, found in Brugia malayi (Filarial nematode worm).